We begin with the raw amino-acid sequence, 449 residues long: Tripartite motif-containing protein 64 (449 aa).

The RING-type zinc finger occupies 15 to 56 (CCICVNYFIDPVTIDCGHSFCRPCLCLCSEEGRAPMRCPSCR). The B box-type zinc-finger motif lies at 87–128 (SSDNICVLHEETKELFCEADKRLLCGPCSESPEHMAHSHSPI). Zn(2+) contacts are provided by C92, H95, C114, and H120. A coiled-coil region spans residues 189 to 225 (LDEEEQRHLQALEREAEELFQQLQDSQVRMTQHLERM). The B30.2/SPRY domain occupies 269-449 (LTSWCITGVL…LRPFFCFGCT (181 aa)).

It belongs to the TRIM/RBCC family.

This is Tripartite motif-containing protein 64 (TRIM64) from Homo sapiens (Human).